Consider the following 75-residue polypeptide: Small ribosomal subunit protein bS18 (75 aa).

Belongs to the bacterial ribosomal protein bS18 family. In terms of assembly, part of the 30S ribosomal subunit. Forms a tight heterodimer with protein bS6.

In terms of biological role, binds as a heterodimer with protein bS6 to the central domain of the 16S rRNA, where it helps stabilize the platform of the 30S subunit. The chain is Small ribosomal subunit protein bS18 from Mycoplasma capricolum subsp. capricolum (strain California kid / ATCC 27343 / NCTC 10154).